The chain runs to 203 residues: Pyridoxine/pyridoxamine 5'-phosphate oxidase (203 aa).

FMN contacts are provided by residues 51-56, 66-67, Arg72, Lys73, and Gln95; these read RMVLLK and YT. Lys56 contributes to the substrate binding site. Residues Tyr113, Arg117, and Ser121 each coordinate substrate. FMN is bound by residues 130-131 and Trp175; that span reads QS. Substrate is bound at residue 181–183; the sequence is RLH. Residue Arg185 coordinates FMN.

The protein belongs to the pyridoxamine 5'-phosphate oxidase family. Homodimer. It depends on FMN as a cofactor.

The catalysed reaction is pyridoxamine 5'-phosphate + O2 + H2O = pyridoxal 5'-phosphate + H2O2 + NH4(+). It carries out the reaction pyridoxine 5'-phosphate + O2 = pyridoxal 5'-phosphate + H2O2. Its pathway is cofactor metabolism; pyridoxal 5'-phosphate salvage; pyridoxal 5'-phosphate from pyridoxamine 5'-phosphate: step 1/1. It participates in cofactor metabolism; pyridoxal 5'-phosphate salvage; pyridoxal 5'-phosphate from pyridoxine 5'-phosphate: step 1/1. Its function is as follows. Catalyzes the oxidation of either pyridoxine 5'-phosphate (PNP) or pyridoxamine 5'-phosphate (PMP) into pyridoxal 5'-phosphate (PLP). The protein is Pyridoxine/pyridoxamine 5'-phosphate oxidase of Novosphingobium aromaticivorans (strain ATCC 700278 / DSM 12444 / CCUG 56034 / CIP 105152 / NBRC 16084 / F199).